The following is an 88-amino-acid chain: Small ribosomal subunit protein uS15 (88 aa).

The protein belongs to the universal ribosomal protein uS15 family. Part of the 30S ribosomal subunit. Forms a bridge to the 50S subunit in the 70S ribosome, contacting the 23S rRNA.

One of the primary rRNA binding proteins, it binds directly to 16S rRNA where it helps nucleate assembly of the platform of the 30S subunit by binding and bridging several RNA helices of the 16S rRNA. Functionally, forms an intersubunit bridge (bridge B4) with the 23S rRNA of the 50S subunit in the ribosome. The chain is Small ribosomal subunit protein uS15 from Leptospira interrogans serogroup Icterohaemorrhagiae serovar copenhageni (strain Fiocruz L1-130).